The following is a 771-amino-acid chain: Semaphorin-3A (771 aa).

The first 20 residues, 1–20 (MGWLTRIVCLFWGVLLTARA), serve as a signal peptide directing secretion. The 484-residue stretch at 31 to 514 (RLKLSYKEML…STAGVAQLPL (484 aa)) folds into the Sema domain. An N-linked (GlcNAc...) asparagine glycan is attached at Asn-53. A disulfide bridge connects residues Cys-103 and Cys-114. Asn-125 carries an N-linked (GlcNAc...) asparagine glycan. Intrachain disulfides connect Cys-132-Cys-141, Cys-269-Cys-381, Cys-293-Cys-341, and Cys-517-Cys-535. The Ig-like C2-type domain occupies 580 to 664 (PEERIIYGVE…GFIQTLLKVT (85 aa)). An N-linked (GlcNAc...) asparagine glycan is attached at Asn-590. Cys-649 and Cys-722 are oxidised to a cystine. Residues 728 to 737 (RDRKQRRQRP) show a composition bias toward basic residues. A disordered region spans residues 728–771 (RDRKQRRQRPGHTPGNSNKWKHLQENKKGRNRRTHEFERAPRSV). Over residues 749–771 (HLQENKKGRNRRTHEFERAPRSV) the composition is skewed to basic and acidic residues.

Belongs to the semaphorin family. In terms of assembly, interacts with PLXND1. As to expression, expressed in the dorsal root ganglia.

It localises to the secreted. Functionally, involved in the development of the olfactory system and in neuronal control of puberty. Induces the collapse and paralysis of neuronal growth cones. Could serve as a ligand that guides specific growth cones by a motility-inhibiting mechanism. Binds to the complex neuropilin-1/plexin-1. The sequence is that of Semaphorin-3A (SEMA3A) from Homo sapiens (Human).